Consider the following 406-residue polypeptide: Tryptophan synthase beta chain (406 aa).

Lys99 is subject to N6-(pyridoxal phosphate)lysine.

Belongs to the TrpB family. Tetramer of two alpha and two beta chains. Requires pyridoxal 5'-phosphate as cofactor.

It catalyses the reaction (1S,2R)-1-C-(indol-3-yl)glycerol 3-phosphate + L-serine = D-glyceraldehyde 3-phosphate + L-tryptophan + H2O. It participates in amino-acid biosynthesis; L-tryptophan biosynthesis; L-tryptophan from chorismate: step 5/5. The beta subunit is responsible for the synthesis of L-tryptophan from indole and L-serine. The sequence is that of Tryptophan synthase beta chain from Brucella melitensis biotype 2 (strain ATCC 23457).